The sequence spans 3681 residues: E3 ubiquitin-protein ligase UPL1 (3681 aa).

The segment covering 882–891 has biased composition (basic and acidic residues); the sequence is DEKKSVDRGS. The interval 882-912 is disordered; it reads DEKKSVDRGSDNSVSASSSTAERESDEDSSN. The span at 892–901 shows a compositional bias: low complexity; that stretch reads DNSVSASSST. Residues 1269-1310 form the UBA domain; the sequence is QLDESIVGMIVEMGFSRSRAEIALRRVGTNSVEMAMDWLFTN. Positions 1316-1335 constitute a UIM domain; the sequence is QEDDELAQALALSLGNSSET. Disordered stretches follow at residues 1332 to 1358, 1768 to 1802, 2015 to 2094, 2125 to 2151, 2253 to 2287, 2401 to 2435, 2483 to 2505, 2537 to 2606, 2975 to 3003, and 3228 to 3254; these read SSETPKLEDTEKPVDVPQEEAEPKEPP, MEVDEPTTKVKGKSKVGEPEKASSSRVGEPEKAEI, EQLK…MRIE, ENRADDDVDDDMGDEGEDDEGDDEDAD, RQTGRSSLDRSGSEVHGFQHPLFSRPSQTGNTASV, NTTEIQEQLHPDVPPSVGSETVLGDGNEGGQQSEE, PLPLNSTPNEIDRMEVGEGDGAP, IAPP…APEV, SPSSGVPEKLENKPVGEEASSETRKDAES, and TAGEVKESSAHGSSSKTSVDSQKKTDG. Composition is skewed to basic and acidic residues over residues 1336 to 1345, 1782 to 1802, and 2017 to 2037; these read PKLEDTEKPV, KVGEPEKASSSRVGEPEKAEI, and LKSEVPNEKKNRDSDERHDSH. Residues 2038-2087 are compositionally biased toward polar residues; that stretch reads GNSTETEADELNQNNSSLQQVTDAAGNGQEQAQVSSQSAGERGSSQTQAM. Residues 2130-2151 show a composition bias toward acidic residues; the sequence is DDVDDDMGDEGEDDEGDDEDAD. The segment covering 2253–2265 has biased composition (basic and acidic residues); sequence RQTGRSSLDRSGS. A compositionally biased stretch (polar residues) spans 2277-2287; the sequence is RPSQTGNTASV. Residue Ser2598 is modified to Phosphoserine. Residues 2982–3002 show a composition bias toward basic and acidic residues; the sequence is EKLENKPVGEEASSETRKDAE. Residues 3237–3247 are compositionally biased toward polar residues; the sequence is AHGSSSKTSVD. The HECT domain occupies 3340–3681; sequence SPQDLKGRLN…HEASEGFGFA (342 aa). Cys3648 acts as the Glycyl thioester intermediate in catalysis.

Belongs to the UPL family. TOM1/PTR1 subfamily. In terms of tissue distribution, widely expressed. Expressed in root, stem, cauline and rosette leaf, seedling and flower (at protein level).

It carries out the reaction S-ubiquitinyl-[E2 ubiquitin-conjugating enzyme]-L-cysteine + [acceptor protein]-L-lysine = [E2 ubiquitin-conjugating enzyme]-L-cysteine + N(6)-ubiquitinyl-[acceptor protein]-L-lysine.. It participates in protein modification; protein ubiquitination. In terms of biological role, probable E3 ubiquitin-protein ligase which mediates ubiquitination and subsequent proteasomal degradation of target proteins. This chain is E3 ubiquitin-protein ligase UPL1 (UPL1), found in Arabidopsis thaliana (Mouse-ear cress).